Reading from the N-terminus, the 522-residue chain is Lysine--tRNA ligase (522 aa).

The 'HIGH' region signature appears at 44–52 (PSGLPHIGT). The 'KMSKS' region motif lies at 290 to 294 (KISKS). Residue Lys-293 participates in ATP binding.

The protein belongs to the class-I aminoacyl-tRNA synthetase family.

It localises to the cytoplasm. It carries out the reaction tRNA(Lys) + L-lysine + ATP = L-lysyl-tRNA(Lys) + AMP + diphosphate. The polypeptide is Lysine--tRNA ligase (Rickettsia conorii (strain ATCC VR-613 / Malish 7)).